A 315-amino-acid polypeptide reads, in one-letter code: Peroxidase 1 (315 aa).

Residues 1-21 (MASSSYTSLLVLVALVTAASA) form the signal peptide. Residue glutamine 22 is modified to Pyrrolidone carboxylic acid. 4 disulfides stabilise this stretch: cysteine 32-cysteine 107, cysteine 65-cysteine 70, cysteine 113-cysteine 310, and cysteine 193-cysteine 219. The active-site Proton acceptor is histidine 63. The Ca(2+) site is built by aspartate 64, valine 67, glycine 69, aspartate 71, and serine 73. Substrate is bound at residue proline 155. Asparagine 158 is a glycosylation site (N-linked (GlcNAc...) asparagine). Histidine 186 contributes to the heme b binding site. Threonine 187 contacts Ca(2+). The Ca(2+) site is built by aspartate 234, threonine 237, and aspartate 242. An N-linked (GlcNAc...) asparagine glycan is attached at asparagine 265.

This sequence belongs to the peroxidase family. Classical plant (class III) peroxidase subfamily. The cofactor is Ca(2+). It depends on heme b as a cofactor.

The protein resides in the secreted. The enzyme catalyses 2 a phenolic donor + H2O2 = 2 a phenolic radical donor + 2 H2O. In terms of biological role, removal of H(2)O(2), oxidation of toxic reductants, biosynthesis and degradation of lignin, suberization, auxin catabolism, response to environmental stresses such as wounding, pathogen attack and oxidative stress. These functions might be dependent on each isozyme/isoform in each plant tissue. Involved in defense response to powdery meldew fungus. The protein is Peroxidase 1 of Hordeum vulgare (Barley).